Reading from the N-terminus, the 541-residue chain is Membrane protein insertase YidC (541 aa).

Transmembrane regions (helical) follow at residues 6–26 (NLLLIGLLFVSFLLWQQWESD), 326–346 (VVDYGFLWWLAVPIHWILMFF), 349–369 (LVHNWGVAIILVTLTVRGLLY), 420–440 (GGCLPILLQMPIFIALYWVLL), 457–477 (LSVQDPYYVLPLLMGASMWAM), and 500–520 (MIFTVFFLWFPAGLVLYWLVG).

The protein belongs to the OXA1/ALB3/YidC family. Type 1 subfamily. Interacts with the Sec translocase complex via SecD. Specifically interacts with transmembrane segments of nascent integral membrane proteins during membrane integration.

The protein localises to the cell inner membrane. Functionally, required for the insertion and/or proper folding and/or complex formation of integral membrane proteins into the membrane. Involved in integration of membrane proteins that insert both dependently and independently of the Sec translocase complex, as well as at least some lipoproteins. Aids folding of multispanning membrane proteins. This Shewanella amazonensis (strain ATCC BAA-1098 / SB2B) protein is Membrane protein insertase YidC.